Consider the following 1081-residue polypeptide: Zinc finger protein 827 (1081 aa).

The segment covering Met1 to Lys10 has biased composition (basic and acidic residues). The tract at residues Met1–Ser14 is mediates direct interaction with RBBP4. A disordered region spans residues Met1–Ser77. Positions Arg3–Lys5 match the RRK motif; mediates NuRD recruitment to telomeres motif. Residues Glu62–Ser77 show a composition bias toward polar residues. Glycyl lysine isopeptide (Lys-Gly) (interchain with G-Cter in SUMO2) cross-links involve residues Lys176, Lys216, and Lys226. Disordered stretches follow at residues Lys258–Ser280 and Glu305–Leu348. Positions Val327–Gln344 are enriched in pro residues. Residues Lys360 and Lys372 each participate in a glycyl lysine isopeptide (Lys-Gly) (interchain with G-Cter in SUMO2) cross-link. C2H2-type zinc fingers lie at residues Phe374–His396, His402–His424, and Phe433–His455. Residues Lys466, Lys475, Lys523, Lys549, Lys580, Lys587, and Lys597 each participate in a glycyl lysine isopeptide (Lys-Gly) (interchain with G-Cter in SUMO2) cross-link. The tract at residues Glu525–Pro553 is disordered. Residues Val616–Gly627 show a composition bias toward polar residues. Residues Val616–Gly640 form a disordered region. Positions Asp631–Gly640 are enriched in basic and acidic residues. Residues Lys634, Lys639, and Lys658 each participate in a glycyl lysine isopeptide (Lys-Gly) (interchain with G-Cter in SUMO2) cross-link. Residue Lys673 forms a Glycyl lysine isopeptide (Lys-Gly) (interchain with G-Cter in SUMO1); alternate linkage. Lys673 participates in a covalent cross-link: Glycyl lysine isopeptide (Lys-Gly) (interchain with G-Cter in SUMO2); alternate. Glycyl lysine isopeptide (Lys-Gly) (interchain with G-Cter in SUMO2) cross-links involve residues Lys704, Lys710, Lys742, Lys778, and Lys798. C2H2-type zinc fingers lie at residues Phe817–His839 and Tyr845–His867. Residues Lys870 and Lys891 each participate in a glycyl lysine isopeptide (Lys-Gly) (interchain with G-Cter in SUMO2) cross-link. C2H2-type zinc fingers lie at residues Tyr897–His919 and Ile929–His952. The segment covering His947–Pro960 has biased composition (basic and acidic residues). Residues His947–Glu1013 are disordered. Residue Lys958 forms a Glycyl lysine isopeptide (Lys-Gly) (interchain with G-Cter in SUMO2) linkage. Over residues Ser961–Ala978 the composition is skewed to low complexity. Positions Asn979–Gln988 are enriched in basic and acidic residues. Lys1014 participates in a covalent cross-link: Glycyl lysine isopeptide (Lys-Gly) (interchain with G-Cter in SUMO2). C2H2-type zinc fingers lie at residues Phe1019–His1041 and Phe1047–His1069.

The protein belongs to the krueppel C2H2-type zinc-finger protein family. Part of a transcription inhibitory ribonucleoprotein complex composed at least of the circular RNA circZNF827, HNRNPK and HNRNPL. Interacts with the nucleosome remodeling and histone deacetylase/NuRD complex. Interacts with RBBP4; the interaction is direct and recruits RBBP4, a component of the NuRD complex, to telomeres.

It is found in the nucleus. The protein localises to the chromosome. Its subcellular location is the telomere. Functionally, as part of a ribonucleoprotein complex composed at least of HNRNPK, HNRNPL and the circular RNA circZNF827 that nucleates the complex on chromatin, may negatively regulate the transcription of genes involved in neuronal differentiation. Could also recruit the nucleosome remodeling and histone deacetylase/NuRD complex to telomeric regions of chromosomes to regulate chromatin remodeling as part of telomere maintenance. This is Zinc finger protein 827 (ZNF827) from Macaca fascicularis (Crab-eating macaque).